Consider the following 187-residue polypeptide: Probable nicotinate-nucleotide adenylyltransferase (187 aa).

Belongs to the NadD family.

The enzyme catalyses nicotinate beta-D-ribonucleotide + ATP + H(+) = deamido-NAD(+) + diphosphate. It participates in cofactor biosynthesis; NAD(+) biosynthesis; deamido-NAD(+) from nicotinate D-ribonucleotide: step 1/1. Its function is as follows. Catalyzes the reversible adenylation of nicotinate mononucleotide (NaMN) to nicotinic acid adenine dinucleotide (NaAD). This is Probable nicotinate-nucleotide adenylyltransferase from Anaeromyxobacter dehalogenans (strain 2CP-1 / ATCC BAA-258).